The primary structure comprises 684 residues: Zinc finger BED domain-containing protein RICESLEEPER 4 (684 aa).

Residues 54–113 (KRKSAIWEHFTLVDVSDGCKRASCIHCNQSLAYSSGSKNSGTSHLTRHIAEWCRVLKDRQ) form a BED-type zinc finger. Residues C77, C80, H101, and C106 each contribute to the Zn(2+) site. Residues 595 to 680 (ELELYLEEAL…EALLCAKDWL (86 aa)) are HATC (Hobo-Ac-Tam3) domain.

Homodimer.

The protein resides in the nucleus. Transposase-like protein that is essential for plant growth and development. May regulate global gene expression by recruiting other cellular factors. The protein is Zinc finger BED domain-containing protein RICESLEEPER 4 of Oryza sativa subsp. japonica (Rice).